A 113-amino-acid chain; its full sequence is Hydrogenase maturation factor HypA (113 aa).

A Ni(2+)-binding site is contributed by histidine 2. Zn(2+) is bound by residues cysteine 73, cysteine 76, cysteine 89, and cysteine 92.

The protein belongs to the HypA/HybF family.

Involved in the maturation of [NiFe] hydrogenases. Required for nickel insertion into the metal center of the hydrogenase. The polypeptide is Hydrogenase maturation factor HypA (Azotobacter vinelandii).